The sequence spans 278 residues: tRNA pseudouridine synthase A (278 aa).

The active-site Nucleophile is the aspartate 52. Tyrosine 111 contacts substrate. Residues 253–264 (AKAGPLEAAPLG) are compositionally biased toward low complexity. Residues 253-278 (AKAGPLEAAPLGEAPLKEATLKEDWR) form a disordered region. A compositionally biased stretch (basic and acidic residues) spans 267 to 278 (PLKEATLKEDWR).

The protein belongs to the tRNA pseudouridine synthase TruA family. As to quaternary structure, homodimer.

It catalyses the reaction uridine(38/39/40) in tRNA = pseudouridine(38/39/40) in tRNA. Its function is as follows. Formation of pseudouridine at positions 38, 39 and 40 in the anticodon stem and loop of transfer RNAs. The sequence is that of tRNA pseudouridine synthase A from Rhodospirillum rubrum (strain ATCC 11170 / ATH 1.1.1 / DSM 467 / LMG 4362 / NCIMB 8255 / S1).